A 358-amino-acid chain; its full sequence is MPAVLSSVLSNITDFVVHEGNGVKGLADMGLQSLPKQYIQPAEERITTSTVIVDDTIPVIDLSEWGSDPKVGDLICEAAEKWGFFQIVNHGVPLEVLEEVKAATYRFFRLPAEEKNKHSKDNSPSNNVRYGTSFTPHAEKALEWKDFLSLFYVSDEEAAALWPSACRDEALTFMRNCDAVIKRLLKSLMKGLNVTEIDGTKESLLMGSKRINMNYYPKCPNPELTVGVGRHSDVSTLTILLQDQIGGLYVRKLDSDTWVHVPPINGAIVINVGDALQILSNGRYKSIEHRVIANGSNNRISVPIFVNPRPNDIIGPLPELLESGEKAVYKNVLYSDYVKHFFRKAHDGKETVDFAKIN.

One can recognise a Fe2OG dioxygenase domain in the interval 200 to 308; that stretch reads TKESLLMGSK…RISVPIFVNP (109 aa). Position 216 (tyrosine 216) interacts with 2-oxoglutarate. Fe cation is bound by residues histidine 231, aspartate 233, and histidine 289. The 2-oxoglutarate site is built by arginine 299 and serine 301.

It belongs to the iron/ascorbate-dependent oxidoreductase family. Requires L-ascorbate as cofactor. Fe(2+) is required as a cofactor. As to expression, mostly expressed in tubers, and, at low levels, in underground stems, stems, leaves and petioles.

The catalysed reaction is (E)-feruloyl-CoA + 2-oxoglutarate + O2 = (E)-6-hydroxyferuloyl-CoA + succinate + CO2. The protein operates within phenylpropanoid metabolism. In terms of biological role, 2-oxoglutarate (OG)- and Fe(II)-dependent dioxygenase (2OGD) involved in scopoletin biosynthesis. Converts feruloyl CoA into 6'-hydroxyferuloyl CoA, and, at low efficiency, caffeoyl-CoA into 6'-hydroxycaffeate, but has no activity with p-coumaroyl-CoA. This Ipomoea batatas (Sweet potato) protein is Feruloyl CoA ortho-hydroxylase F6H1-3.